Consider the following 506-residue polypeptide: Aluminum-activated malate transporter 7 (506 aa).

6 consecutive transmembrane segments (helical) span residues 28–48 (VGLV…YDSF), 52–72 (AMWA…ATLG), 78–98 (VAAT…ASMS), 104–124 (PILL…VRFF), 130–150 (RYDY…VSGF), and 166–186 (VIIG…VWAG). Residues 461–485 (DDGNNDDTSKNDNGSKEVSIHEKHE) are disordered. A compositionally biased stretch (basic and acidic residues) spans 467-485 (DTSKNDNGSKEVSIHEKHE).

Belongs to the aromatic acid exporter (TC 2.A.85) family.

The protein localises to the membrane. Functionally, malate transporter. In Arabidopsis thaliana (Mouse-ear cress), this protein is Aluminum-activated malate transporter 7 (ALMT7).